Reading from the N-terminus, the 207-residue chain is MAQGTLYIVSAPSGAGKSSLIQALLKTQPLYDTQVSVSHTTRAPRPGEVHGEHYFFVNHDEFKTMIGREAFLEHAEVFGNYYGTSRETTEQVLATGVDVFLDIDWQGAQQIREKMPQARSIFILPPSKIELDRRLRGRGQDSEEVIAKRMAQAVAEMSHYAEYDYLIVNDDFDTALSDLKTIIRAERLRMSRQKQRHDALISKLLAD.

The Guanylate kinase-like domain maps to 4 to 184 (GTLYIVSAPS…ALSDLKTIIR (181 aa)). Position 11–18 (11–18 (APSGAGKS)) interacts with ATP.

The protein belongs to the guanylate kinase family.

It localises to the cytoplasm. It catalyses the reaction GMP + ATP = GDP + ADP. The enzyme catalyses dZMP + ATP = dZDP + ADP. The protein operates within purine metabolism. Essential for recycling GMP and indirectly, cGMP. In terms of biological role, (Microbial infection) Catalyzes the phosphorylation of dZMP to dZDP, when the bacterium is infected by a phage that produces the substrate for the synthesis of dZTP (2- amino-2'-deoxyadenosine 5'-triphosphate), which is then used by the phage as a DNA polymerase substrate. In Salmonella choleraesuis (strain SC-B67), this protein is Guanylate kinase.